A 205-amino-acid polypeptide reads, in one-letter code: Hydrogenase-4 component A (205 aa).

4 4Fe-4S ferredoxin-type domains span residues 2 to 31, 41 to 72, 73 to 102, and 140 to 172; these read NRFV…TQGL, KTST…SQRD, DAIQ…ASGS, and QTVA…LITG. [4Fe-4S] cluster-binding residues include C12, C15, C18, C22, C51, C54, C59, C63, C82, C85, C88, C92, C146, C149, C158, and C162.

[4Fe-4S] cluster is required as a cofactor.

Probable electron transfer protein for hydrogenase 4. In Escherichia coli (strain K12), this protein is Hydrogenase-4 component A.